The following is a 539-amino-acid chain: Probable malate:quinone oxidoreductase 3 (539 aa).

Residues 516 to 539 form a disordered region; the sequence is LEPPVSPQRPESIRPADSQGVASR.

The protein belongs to the MQO family. FAD is required as a cofactor.

It carries out the reaction (S)-malate + a quinone = a quinol + oxaloacetate. Its pathway is carbohydrate metabolism; tricarboxylic acid cycle; oxaloacetate from (S)-malate (quinone route): step 1/1. The chain is Probable malate:quinone oxidoreductase 3 from Pseudomonas putida (strain ATCC 47054 / DSM 6125 / CFBP 8728 / NCIMB 11950 / KT2440).